The primary structure comprises 309 residues: MKKVSVIIFIVIMLGIGCLNLNESIKETCPRTSNITQAMSCYIPEDFEILKGVAEEIPGGTIEWKIWNILEWEEDHLSYDNNKGSDIILKPSEFIKVGEGVCTDYAVLTAGLLLASNISPVYLMIFHFMEDPTLHAAVAVNISGKLFILDQRLPPKNLDSYLIQFSKLEGKIILFAEMYKVEMKKGRVVVSGRKYLDLSNFGFYPGNISLDMLENLLLSEFQRRTNLFPRIDLKTVLPQGLKERKVWMIKFENFKLFYDDTFVEQYSNFIADEILKNEKIKSDISRYSAFWISIKLEGDDLIVRLFLGR.

The next 2 membrane-spanning stretches (helical) occupy residues 5 to 25 and 106 to 126; these read SVII…NESI and AVLT…LMIF.

The protein belongs to the UPF0252 family.

Its subcellular location is the cell membrane. The chain is UPF0252 protein PH0672 from Pyrococcus horikoshii (strain ATCC 700860 / DSM 12428 / JCM 9974 / NBRC 100139 / OT-3).